The following is a 275-amino-acid chain: Voltage-dependent calcium channel gamma-7 subunit (275 aa).

Helical transmembrane passes span 8-28 (ALTLLSSVFGACGLLLVGIAV), 103-123 (FPMVSLFLVFTAFVISNIGHI), 129-149 (ILAFVSGIFFILSGLSLVVGL), and 179-199 (FAFAASSFLLKEGAGVMSVYL). Phosphoserine occurs at positions 222, 225, and 273.

This sequence belongs to the PMP-22/EMP/MP20 family. CACNG subfamily. Interacts with CACNA1C. Identified in a complex with the L-type calcium channel subunits CACNA1C, CACNA2D1 and either CACNB1 or CACNB2. Acts as an auxiliary subunit for AMPA-selective glutamate receptors (AMPARs), such as GRIA1 and GRIA2. As to expression, detected in heart left ventricle. Widely expressed.

It localises to the cell membrane. Regulates the activity of L-type calcium channels that contain CACNA1C as pore-forming subunit. Regulates the trafficking and gating properties of AMPA-selective glutamate receptors (AMPARs). Promotes their targeting to the cell membrane and synapses and modulates their gating properties by slowing their rates of activation, deactivation and desensitization and by mediating their resensitization. Displays subunit-specific AMPA receptor regulation. Shows specificity only for GRIA1 and GRIA2. In Homo sapiens (Human), this protein is Voltage-dependent calcium channel gamma-7 subunit (CACNG7).